Here is a 196-residue protein sequence, read N- to C-terminus: ATP synthase subunit b (196 aa).

Residues 24–44 (PLSELLIGTLSFALLVAFFFW) form a helical membrane-spanning segment.

It belongs to the ATPase B chain family. F-type ATPases have 2 components, F(1) - the catalytic core - and F(0) - the membrane proton channel. F(1) has five subunits: alpha(3), beta(3), gamma(1), delta(1), epsilon(1). F(0) has three main subunits: a(1), b(2) and c(10-14). The alpha and beta chains form an alternating ring which encloses part of the gamma chain. F(1) is attached to F(0) by a central stalk formed by the gamma and epsilon chains, while a peripheral stalk is formed by the delta and b chains.

It is found in the cell membrane. Functionally, f(1)F(0) ATP synthase produces ATP from ADP in the presence of a proton or sodium gradient. F-type ATPases consist of two structural domains, F(1) containing the extramembraneous catalytic core and F(0) containing the membrane proton channel, linked together by a central stalk and a peripheral stalk. During catalysis, ATP synthesis in the catalytic domain of F(1) is coupled via a rotary mechanism of the central stalk subunits to proton translocation. Component of the F(0) channel, it forms part of the peripheral stalk, linking F(1) to F(0). The protein is ATP synthase subunit b of Frankia casuarinae (strain DSM 45818 / CECT 9043 / HFP020203 / CcI3).